Consider the following 189-residue polypeptide: Peptidyl-tRNA hydrolase (189 aa).

Tyrosine 14 serves as a coordination point for tRNA. Histidine 19 serves as the catalytic Proton acceptor. 3 residues coordinate tRNA: phenylalanine 64, asparagine 66, and asparagine 112.

Belongs to the PTH family. As to quaternary structure, monomer.

It localises to the cytoplasm. The enzyme catalyses an N-acyl-L-alpha-aminoacyl-tRNA + H2O = an N-acyl-L-amino acid + a tRNA + H(+). Hydrolyzes ribosome-free peptidyl-tRNAs (with 1 or more amino acids incorporated), which drop off the ribosome during protein synthesis, or as a result of ribosome stalling. Functionally, catalyzes the release of premature peptidyl moieties from peptidyl-tRNA molecules trapped in stalled 50S ribosomal subunits, and thus maintains levels of free tRNAs and 50S ribosomes. This Rhizorhabdus wittichii (strain DSM 6014 / CCUG 31198 / JCM 15750 / NBRC 105917 / EY 4224 / RW1) (Sphingomonas wittichii) protein is Peptidyl-tRNA hydrolase.